Consider the following 212-residue polypeptide: Uracil phosphoribosyltransferase (212 aa).

5-phospho-alpha-D-ribose 1-diphosphate is bound by residues Arg-78, Arg-103, and 130–138 (DPMLATGGS). Uracil is bound by residues Ile-193 and 198 to 200 (GDA). A 5-phospho-alpha-D-ribose 1-diphosphate-binding site is contributed by Asp-199.

The protein belongs to the UPRTase family. It depends on Mg(2+) as a cofactor.

It carries out the reaction UMP + diphosphate = 5-phospho-alpha-D-ribose 1-diphosphate + uracil. Its pathway is pyrimidine metabolism; UMP biosynthesis via salvage pathway; UMP from uracil: step 1/1. With respect to regulation, allosterically activated by GTP. Its function is as follows. Catalyzes the conversion of uracil and 5-phospho-alpha-D-ribose 1-diphosphate (PRPP) to UMP and diphosphate. The sequence is that of Uracil phosphoribosyltransferase from Stutzerimonas stutzeri (strain A1501) (Pseudomonas stutzeri).